Consider the following 811-residue polypeptide: MRMIQRERKREKEEGQLKERTVVNMADPDDNEAEATGLQQYSGETTRDDNEESMNDSFTLTSRNRGRSNTISSIVSGYEIMKEHMDKEKFMYLILASLLLYMGFVAAFAPRTSLSRDFRRFHSSRLTNAEVYRIYLNSLQQENRAKEHVYKYAGYMSNGASDSSTFKYTLDEFLDMGYKPKVEKYYPWIGEPVDTNVAPLENGKVVYEASMIEDRVKGDPASHARKRQKGFHQYSKNGSVTARYVFCNYGSISDYKLLLKKNIDIEDKIHIVRSGKILPGLKVKNAELYGASSVIIYTDPFDDGKVTEENGFLHYPYGPARNPSYIRRDSVNYFSDTPGDPTTPGYPSKDSDTEHMSPVGRVPRIPSVPMSARDVQPILERLNGRGFQIGPGSNIKDFGSFTGPSSSIDKVHLHNELTYNIKEMSSVEVSIPGIFTEGEIIIGAHRDSLASSSAGDANSGSAILLEIARGMSKLLKHGWKPLRPIKLISWDGERSGLLGSTDYAEAHAAILRRRALVYLNLDNAISGTNFHCKANPLLQDVIYEAAKLTEFNGHEDWSLFDHWKYTSNATISLLDGLSSYTSFQYHLGVPAAHFQFNANDTSGAVYHSNSVFDSPTWLEKFTNSDYKLHNTMAMFVGLTTLMLSENELARFNTHVYLKKIYNWYIAWHSNLSSAFPQDDEVNSLAKRVLDLLKVATQEDSIQFDQQNGILYKECREALPVWAFYKKIKSYIKLQRSNSKSKQIDQLFITHRGLKDREWMKYSLLAPSKFEGSVGEVLPGLHEGLADIDRNEVIQWLTILLSQFSNVRYLLQ.

Residues 1 to 21 (MRMIQRERKREKEEGQLKERT) show a composition bias toward basic and acidic residues. Residues 1 to 63 (MRMIQRERKR…MNDSFTLTSR (63 aa)) are disordered. N-linked (GlcNAc...) asparagine glycosylation is present at N55. Residues 90–110 (FMYLILASLLLYMGFVAAFAP) form a helical membrane-spanning segment. N-linked (GlcNAc...) asparagine glycosylation occurs at N237. The disordered stretch occupies residues 334–367 (FSDTPGDPTTPGYPSKDSDTEHMSPVGRVPRIPS). The span at 336–345 (DTPGDPTTPG) shows a compositional bias: low complexity. Residues H445, D456, and D522 each contribute to the Zn(2+) site. 2 N-linked (GlcNAc...) asparagine glycosylation sites follow: N568 and N599. Position 607 (H607) interacts with Zn(2+). N-linked (GlcNAc...) asparagine glycosylation occurs at N670.

This sequence belongs to the peptidase M28 family. M28B subfamily. Zn(2+) is required as a cofactor.

The protein localises to the membrane. Its function is as follows. Involved in vacuolar protein sorting. In Saccharomyces cerevisiae (strain ATCC 204508 / S288c) (Baker's yeast), this protein is Vacuolar protein sorting-associated protein 70 (VPS70).